Consider the following 172-residue polypeptide: MNRAEKREFVTWLNKIFQESGSVVVAHYSGLTVSQMSDLRSKIGEAGGAVKVAKNTLAKIALQGTKSESMANLFTGQTLIAYSEDPIVAPKVAVDFAKANDKLVILGGSMGAVSLSVDAVKSLASLPSLNELRAKLVGMISTPATRVAQVIKAPAGQVARVIGAYAQKGEAA.

The protein belongs to the universal ribosomal protein uL10 family. As to quaternary structure, part of the ribosomal stalk of the 50S ribosomal subunit. The N-terminus interacts with L11 and the large rRNA to form the base of the stalk. The C-terminus forms an elongated spine to which L12 dimers bind in a sequential fashion forming a multimeric L10(L12)X complex.

Its function is as follows. Forms part of the ribosomal stalk, playing a central role in the interaction of the ribosome with GTP-bound translation factors. This is Large ribosomal subunit protein uL10 from Bartonella bacilliformis (strain ATCC 35685 / KC583 / Herrer 020/F12,63).